The following is a 269-amino-acid chain: uncharacterized protein (269 aa).

In terms of domain architecture, ACT spans 14–89 (FEYEIQVNRP…KLREPRLRDR (76 aa)).

This is an uncharacterized protein from Bacillus subtilis (strain 168).